The following is an 86-amino-acid chain: Short neurotoxin homolog NTL1 (86 aa).

Residues 1–21 form the signal peptide; that stretch reads MKTLLLSLVVLTIACLDLGYT. 4 disulfides stabilise this stretch: C24-C45, C38-C62, C66-C78, and C79-C84.

In terms of tissue distribution, expressed by the venom gland.

The protein localises to the secreted. In Bungarus multicinctus (Many-banded krait), this protein is Short neurotoxin homolog NTL1.